The sequence spans 490 residues: MNWSNTPSFLEKQRQRLERYQFQIKVSEQGRVVSVGDGIIWIKGLPGAAIDEILISEDECCIAMVFHLTEELVGAVMLVQTKKLKAGTPIFPLKRVLSIPVGDKLLGRVIDPLGHPLDGGEIPPHEEQGLLDRLSPPILHRDFVNRPLYTGNKMLDNLIPIGKGQRELLIGDNGLGKSALALDIVMNQKDKKVYCVYVLIGQKRSTVSSTIQLLKEANALDYTTVVVAQATALPGLLYLAPFAGCAIAEHWMKKGLDALVIYDDLSAHANSYRELSLLLRRPPGREAFPADIFYLHSRLLERSTCLSPALGGGSMTALPIIETKEGEMATYIPTNLISITDGQIFFDESLFSSGFLPAIDITKSVSRVGGKAQHPQIKKESGRMKLDYLQFLDLELFTRFGAKLDAKMQKQIQKGRVLREILKQERFSPLPIEFQLAWLIAYNEGFFDELNLEDIPKMLKKIEEEIKQSTLSLGSPREQWKKAIKEWLMA.

This sequence belongs to the ATPase alpha/beta chains family. As to quaternary structure, F-type ATPases have 2 components, CF(1) - the catalytic core - and CF(0) - the membrane proton channel. CF(1) has five subunits: alpha(3), beta(3), gamma(1), delta(1), epsilon(1). CF(0) has three main subunits: a(1), b(2) and c(9-12). The alpha and beta chains form an alternating ring which encloses part of the gamma chain. CF(1) is attached to CF(0) by a central stalk formed by the gamma and epsilon chains, while a peripheral stalk is formed by the delta and b chains.

Its subcellular location is the cell inner membrane. The catalysed reaction is ATP + H2O + 4 H(+)(in) = ADP + phosphate + 5 H(+)(out). In terms of biological role, produces ATP from ADP in the presence of a proton gradient across the membrane. The alpha chain is a regulatory subunit. The sequence is that of ATP synthase subunit alpha 1 from Legionella pneumophila (strain Paris).